A 689-amino-acid chain; its full sequence is DNA polymerase epsilon subunit B (689 aa).

Basic and acidic residues predominate over residues 98-115 (EWSHEHPIQHEENILGRT). The segment at 98–155 (EWSHEHPIQHEENILGRTDDDENNSDDEMPIAADSSLQNVSLSSPMRQPTERDEYKQP) is disordered. Over residues 116–126 (DDDENNSDDEM) the composition is skewed to acidic residues. Phosphoserine is present on S122. A compositionally biased stretch (polar residues) spans 132-144 (SSLQNVSLSSPMR). At S141 the chain carries Phosphoserine; by CDC28. Residues 146–155 (PTERDEYKQP) are compositionally biased toward basic and acidic residues. S613 carries the post-translational modification Phosphoserine.

It belongs to the DNA polymerase epsilon subunit B family. As to quaternary structure, DNA polymerase epsilon is a heterotetramer consisting of POL2, DPB2, DPB3 and DPB4. In terms of processing, phosphorylated in a cell cycle dependent manner during late G1 phase. Phosphorylation may facilitate the interaction with POL2 or the activity of DNA polymerase II. Phosphorylation is independent of DNA replication but dependent upon CDC28 in vivo. Both Ser-141 and Ser-613 are phosphorylated in vivo, but in vitro only Ser-141 is phosphorylated by CDC28.

It localises to the cytoplasm. Its subcellular location is the nucleus. Functionally, as accessory component of the DNA polymerase epsilon complex participates in chromosomal DNA replication. It is required during synthesis of the leading and lagging DNA strands at the replication fork and binds at/or near replication origins and moves along DNA with the replication fork. It has 3'-5' proofreading exonuclease activity that correct errors arising during DNA replication. It is also involved in DNA synthesis during DNA repair. The sequence is that of DNA polymerase epsilon subunit B (DPB2) from Saccharomyces cerevisiae (strain ATCC 204508 / S288c) (Baker's yeast).